Here is a 193-residue protein sequence, read N- to C-terminus: MRAHLLHCELAFSFGKYFYSTSFLNLLMINLMFSKLGAIFFLNLALYLLALALFFFFLFNVKVALLKSVSQIYYFNNIFFFKFFVLIFFLNLAGIPPLLGFFLKFLIFFFLFFKTNLAFILIFLGFNMATLFFYLSTVKSFVNRKQASVLNSFNFFIRAELSFLYFFNFFYFFLFFAFFFLDSTFLIFLNLFF.

5 helical membrane passes run 18 to 38, 39 to 59, 83 to 103, 116 to 138, and 161 to 181; these read FYSTSFLNLLMINLMFSKLGA, IFFLNLALYLLALALFFFFLF, FFVLIFFLNLAGIPPLLGFFL, NLAFILIFLGFNMATLFFYLSTV, and LSFLYFFNFFYFFLFFAFFFL.

It localises to the mitochondrion inner membrane. It catalyses the reaction a ubiquinone + NADH + 5 H(+)(in) = a ubiquinol + NAD(+) + 4 H(+)(out). Its function is as follows. Core subunit of the mitochondrial membrane respiratory chain NADH dehydrogenase (Complex I) that is believed to belong to the minimal assembly required for catalysis. Complex I functions in the transfer of electrons from NADH to the respiratory chain. The immediate electron acceptor for the enzyme is believed to be ubiquinone. This is NADH-ubiquinone oxidoreductase chain 2 (ND2) from Paramecium tetraurelia.